Reading from the N-terminus, the 349-residue chain is Holliday junction branch migration complex subunit RuvB (349 aa).

A large ATPase domain (RuvB-L) region spans residues 1-186; the sequence is MSEDYLDRDV…FGFTAHMDFY (186 aa). ATP-binding positions include L25, R26, G67, K70, T71, S72, 133–135, R176, Y186, and R223; that span reads EDF. T71 provides a ligand contact to Mg(2+). The interval 187-257 is small ATPAse domain (RuvB-S); the sequence is EPTELEGVLA…VAKAALAVYD (71 aa). A head domain (RuvB-H) region spans residues 260 to 349; it reads ELGLDRLDRA…GLSQPGLFES (90 aa). Positions 315 and 320 each coordinate DNA.

Belongs to the RuvB family. As to quaternary structure, homohexamer. Forms an RuvA(8)-RuvB(12)-Holliday junction (HJ) complex. HJ DNA is sandwiched between 2 RuvA tetramers; dsDNA enters through RuvA and exits via RuvB. An RuvB hexamer assembles on each DNA strand where it exits the tetramer. Each RuvB hexamer is contacted by two RuvA subunits (via domain III) on 2 adjacent RuvB subunits; this complex drives branch migration. In the full resolvosome a probable DNA-RuvA(4)-RuvB(12)-RuvC(2) complex forms which resolves the HJ.

The protein localises to the cytoplasm. It carries out the reaction ATP + H2O = ADP + phosphate + H(+). Functionally, the RuvA-RuvB-RuvC complex processes Holliday junction (HJ) DNA during genetic recombination and DNA repair, while the RuvA-RuvB complex plays an important role in the rescue of blocked DNA replication forks via replication fork reversal (RFR). RuvA specifically binds to HJ cruciform DNA, conferring on it an open structure. The RuvB hexamer acts as an ATP-dependent pump, pulling dsDNA into and through the RuvAB complex. RuvB forms 2 homohexamers on either side of HJ DNA bound by 1 or 2 RuvA tetramers; 4 subunits per hexamer contact DNA at a time. Coordinated motions by a converter formed by DNA-disengaged RuvB subunits stimulates ATP hydrolysis and nucleotide exchange. Immobilization of the converter enables RuvB to convert the ATP-contained energy into a lever motion, pulling 2 nucleotides of DNA out of the RuvA tetramer per ATP hydrolyzed, thus driving DNA branch migration. The RuvB motors rotate together with the DNA substrate, which together with the progressing nucleotide cycle form the mechanistic basis for DNA recombination by continuous HJ branch migration. Branch migration allows RuvC to scan DNA until it finds its consensus sequence, where it cleaves and resolves cruciform DNA. This Mycobacterium leprae (strain Br4923) protein is Holliday junction branch migration complex subunit RuvB.